The following is a 253-amino-acid chain: Flap endonuclease Xni (253 aa).

Asp104 lines the Mg(2+) pocket. A 5'-3' exonuclease domain is found at 160-250; the sequence is VAPQQLTDFW…HGNLQQLRLN (91 aa). The K(+) site is built by Leu171, Ala172, Pro180, Ile182, and Ile185. The tract at residues 184-189 is interaction with DNA; it reads GIGAKT.

This sequence belongs to the Xni family. Mg(2+) serves as cofactor. It depends on K(+) as a cofactor.

Its function is as follows. Has flap endonuclease activity. During DNA replication, flap endonucleases cleave the 5'-overhanging flap structure that is generated by displacement synthesis when DNA polymerase encounters the 5'-end of a downstream Okazaki fragment. This is Flap endonuclease Xni from Edwardsiella ictaluri (strain 93-146).